The chain runs to 86 residues: Protein Tat (86 aa).

Residues 1–21 are disordered; sequence MDPVDPNLEPWNHPGSQPKTA. The segment at 1-24 is interaction with human CREBBP; that stretch reads MDPVDPNLEPWNHPGSQPKTACNR. The segment at 1–48 is transactivation; it reads MDPVDPNLEPWNHPGSQPKTACNRCHCKKCCYHCQVCFITKGLGISYG. Zn(2+) is bound by residues C22, C25, and C27. The tract at residues 22–37 is cysteine-rich; it reads CNRCHCKKCCYHCQVC. An N6-acetyllysine; by host PCAF modification is found at K28. Residues C30, H33, C34, and C37 each coordinate Zn(2+). Residues 38 to 48 form a core region; sequence FITKGLGISYG. The interval 47–86 is disordered; sequence YGRKKRRQRRRPSQGGQTHQDPIPKQPSSQPRGNPTGPKE. A compositionally biased stretch (basic residues) spans 48–58; it reads GRKKRRQRRRP. Residues 49 to 57 carry the Nuclear localization signal, RNA-binding (TAR), and protein transduction motif; sequence RKKRRQRRR. The segment at 49 to 86 is interaction with the host capping enzyme RNGTT; the sequence is RKKRRQRRRPSQGGQTHQDPIPKQPSSQPRGNPTGPKE. Residues K50 and K51 each carry the N6-acetyllysine; by host EP300 and GCN5L2 modification. R52 and R53 each carry asymmetric dimethylarginine; by host PRMT6. Over residues 60–79 the composition is skewed to polar residues; that stretch reads QGGQTHQDPIPKQPSSQPRG. K71 participates in a covalent cross-link: Glycyl lysine isopeptide (Lys-Gly) (interchain with G-Cter in ubiquitin).

The protein belongs to the lentiviruses Tat family. Interacts with host CCNT1. Associates with the P-TEFb complex composed at least of Tat, P-TEFb (CDK9 and CCNT1), TAR RNA, RNA Pol II. Recruits the HATs CREBBP, TAF1/TFIID, EP300, PCAF and GCN5L2. Interacts with host KAT5/Tip60; this interaction targets the latter to degradation. Interacts with the host deacetylase SIRT1. Interacts with host capping enzyme RNGTT; this interaction stimulates RNGTT. Binds to host KDR, and to the host integrins ITGAV/ITGB3 and ITGA5/ITGB1. Interacts with host KPNB1/importin beta-1 without previous binding to KPNA1/importin alpha-1. Interacts with EIF2AK2. Interacts with host nucleosome assembly protein NAP1L1; this interaction may be required for the transport of Tat within the nucleus, since the two proteins interact at the nuclear rim. Interacts with host C1QBP/SF2P32; this interaction involves lysine-acetylated Tat. Interacts with the host chemokine receptors CCR2, CCR3 and CXCR4. Interacts with host DPP4/CD26; this interaction may trigger an anti-proliferative effect. Interacts with host LDLR. Interacts with the host extracellular matrix metalloproteinase MMP1. Interacts with host PRMT6; this interaction mediates Tat's methylation. Interacts with, and is ubiquitinated by MDM2/Hdm2. Interacts with host PSMC3 and HTATIP2. Interacts with STAB1; this interaction may overcome SATB1-mediated repression of IL2 and IL2RA (interleukin) in T cells by binding to the same domain than HDAC1. Interacts (when acetylated) with human CDK13, thereby increasing HIV-1 mRNA splicing and promoting the production of the doubly spliced HIV-1 protein Nef. Interacts with host TBP; this interaction modulates the activity of transcriptional pre-initiation complex. Interacts with host RELA. Interacts with host PLSCR1; this interaction negatively regulates Tat transactivation activity by altering its subcellular distribution. Asymmetrical arginine methylation by host PRMT6 seems to diminish the transactivation capacity of Tat and affects the interaction with host CCNT1. Post-translationally, acetylation by EP300, CREBBP, GCN5L2/GCN5 and PCAF regulates the transactivation activity of Tat. EP300-mediated acetylation of Lys-50 promotes dissociation of Tat from the TAR RNA through the competitive binding to PCAF's bromodomain. In addition, the non-acetylated Tat's N-terminus can also interact with PCAF. PCAF-mediated acetylation of Lys-28 enhances Tat's binding to CCNT1. Lys-50 is deacetylated by SIRT1. In terms of processing, polyubiquitination by host MDM2 does not target Tat to degradation, but activates its transactivation function and fosters interaction with CCNT1 and TAR RNA. Phosphorylated by EIF2AK2 on serine and threonine residues adjacent to the basic region important for TAR RNA binding and function. Phosphorylation of Tat by EIF2AK2 is dependent on the prior activation of EIF2AK2 by dsRNA.

Its subcellular location is the host nucleus. The protein resides in the host nucleolus. The protein localises to the host cytoplasm. It localises to the secreted. In terms of biological role, transcriptional activator that increases RNA Pol II processivity, thereby increasing the level of full-length viral transcripts. Recognizes a hairpin structure at the 5'-LTR of the nascent viral mRNAs referred to as the transactivation responsive RNA element (TAR) and recruits the cyclin T1-CDK9 complex (P-TEFb complex) that will in turn hyperphosphorylate the RNA polymerase II to allow efficient elongation. The CDK9 component of P-TEFb and other Tat-activated kinases hyperphosphorylate the C-terminus of RNA Pol II that becomes stabilized and much more processive. Other factors such as HTATSF1/Tat-SF1, SUPT5H/SPT5, and HTATIP2 are also important for Tat's function. Besides its effect on RNA Pol II processivity, Tat induces chromatin remodeling of proviral genes by recruiting the histone acetyltransferases (HATs) CREBBP, EP300 and PCAF to the chromatin. This also contributes to the increase in proviral transcription rate, especially when the provirus integrates in transcriptionally silent region of the host genome. To ensure maximal activation of the LTR, Tat mediates nuclear translocation of NF-kappa-B by interacting with host RELA. Through its interaction with host TBP, Tat may also modulate transcription initiation. Tat can reactivate a latently infected cell by penetrating in it and transactivating its LTR promoter. In the cytoplasm, Tat is thought to act as a translational activator of HIV-1 mRNAs. Its function is as follows. Extracellular circulating Tat can be endocytosed by surrounding uninfected cells via the binding to several surface receptors such as CD26, CXCR4, heparan sulfate proteoglycans (HSPG) or LDLR. Neurons are rarely infected, but they internalize Tat via their LDLR. Through its interaction with nuclear HATs, Tat is potentially able to control the acetylation-dependent cellular gene expression. Modulates the expression of many cellular genes involved in cell survival, proliferation or in coding for cytokines or cytokine receptors. Tat plays a role in T-cell and neurons apoptosis. Tat induced neurotoxicity and apoptosis probably contribute to neuroAIDS. Circulating Tat also acts as a chemokine-like and/or growth factor-like molecule that binds to specific receptors on the surface of the cells, affecting many cellular pathways. In the vascular system, Tat binds to ITGAV/ITGB3 and ITGA5/ITGB1 integrins dimers at the surface of endothelial cells and competes with bFGF for heparin-binding sites, leading to an excess of soluble bFGF. The protein is Protein Tat of Homo sapiens (Human).